Consider the following 353-residue polypeptide: Putative transcription factor MTF1 (353 aa).

2 stretches are compositionally biased toward polar residues: residues 11-26 (VTRS…TSPA) and 36-58 (EPSN…QQGN). Disordered regions lie at residues 11 to 96 (VTRS…ALPC) and 129 to 174 (FTTT…TTNP). Low complexity-rich tracts occupy residues 59 to 95 (TEAS…PALP) and 133 to 145 (NSSP…SPSS). Basic residues predominate over residues 148–164 (SHTRKNSKYTVRHHRTR). Over residues 165 to 174 (QSSFNGTTNP) the composition is skewed to polar residues.

The protein resides in the nucleus. May be involved in transcriptional activation. The protein is Putative transcription factor MTF1 (MTF1) of Mucor circinelloides f. lusitanicus (Mucor racemosus var. lusitanicus).